The following is a 509-amino-acid chain: ATP synthase subunit alpha (509 aa).

169 to 176 (GDRQTGKT) serves as a coordination point for ATP.

This sequence belongs to the ATPase alpha/beta chains family. In terms of assembly, F-type ATPases have 2 components, CF(1) - the catalytic core - and CF(0) - the membrane proton channel. CF(1) has five subunits: alpha(3), beta(3), gamma(1), delta(1), epsilon(1). CF(0) has three main subunits: a(1), b(2) and c(9-12). The alpha and beta chains form an alternating ring which encloses part of the gamma chain. CF(1) is attached to CF(0) by a central stalk formed by the gamma and epsilon chains, while a peripheral stalk is formed by the delta and b chains.

It is found in the cell inner membrane. The catalysed reaction is ATP + H2O + 4 H(+)(in) = ADP + phosphate + 5 H(+)(out). Its function is as follows. Produces ATP from ADP in the presence of a proton gradient across the membrane. The alpha chain is a regulatory subunit. The protein is ATP synthase subunit alpha of Rhizobium meliloti (strain 1021) (Ensifer meliloti).